A 735-amino-acid polypeptide reads, in one-letter code: Non-structural protein 1 (735 aa).

Disordered regions lie at residues 18-50, 138-170, and 218-290; these read YAST…SHTM, PEPE…NTPQ, and TSIP…SPMY. Low complexity predominate over residues 38-47; sequence APASLTSTDS. The span at 218 to 234 shows a compositional bias: low complexity; sequence TSIPACSPAPSSLPSIL. The span at 235 to 247 shows a compositional bias: polar residues; sequence TMQTRPPSPSSKS. Residues 254 to 274 are compositionally biased toward basic and acidic residues; sequence LPERRPTRRPEHIANDEDYNR.

It belongs to the aquareoviridae NS1 protein family.

Non-structural protein with ssRNA-binding activity. Is probably involved in the formation of viral inclusions, where the assembly of cores and the replication of viral RNA are thought to occur. The polypeptide is Non-structural protein 1 (S4) (Ctenopharyngodon idella (Grass carp)).